The chain runs to 166 residues: UBA-like domain-containing protein 2-A (166 aa).

The interval 120–166 (QQPVWLPPASPTTHLHHHHHHPQPVWPPNSQPTGGPQKAMAAMDGQR) is disordered.

It belongs to the UBALD family.

The polypeptide is UBA-like domain-containing protein 2-A (ubald2-a) (Xenopus laevis (African clawed frog)).